Consider the following 1097-residue polypeptide: Protease Do-like 7 (1097 aa).

The interval 55-243 is serine protease; that stretch reads VLRTTACRAF…LPLQRVVRAL (189 aa). The 98-residue stretch at 269–366 folds into the PDZ domain; the sequence is MTFLHKGFDE…RGGQPLSVSV (98 aa). Residue histidine 524 is the Charge relay system of the active site. Residues 546-556 show a composition bias toward polar residues; the sequence is TSSGDGSQNDF. The segment at 546–577 is disordered; the sequence is TSSGDGSQNDFGSEAKKQRVDEDSSDGIAANG. Basic and acidic residues predominate over residues 558–567; that stretch reads SEAKKQRVDE. The active-site Charge relay system is serine 785.

Belongs to the peptidase S1C family.

The protein resides in the cytoplasm. Functionally, probable serine protease. The polypeptide is Protease Do-like 7 (DEGP7) (Arabidopsis thaliana (Mouse-ear cress)).